Here is a 266-residue protein sequence, read N- to C-terminus: Phosphoethanolamine N-methyltransferase (266 aa).

Residue Gln-18 coordinates phosphoethanolamine. Residue Tyr-19 is part of the active site. Tyr-27 contacts phosphoethanolamine. 8 residues coordinate S-adenosyl-L-methionine: Ile-36, Ser-37, Gly-63, Asp-85, Ile-86, Asp-110, Ile-111, and Arg-127. Residue His-132 is part of the active site. Phosphoethanolamine is bound by residues Tyr-160, Tyr-175, Arg-179, Tyr-181, and Lys-247.

The protein belongs to the class I-like SAM-binding methyltransferase superfamily. PEAMT family. In terms of assembly, monomer.

It is found in the golgi apparatus membrane. It localises to the cytoplasm. The enzyme catalyses phosphoethanolamine + S-adenosyl-L-methionine = N-methylethanolamine phosphate + S-adenosyl-L-homocysteine + H(+). It carries out the reaction N-methylethanolamine phosphate + S-adenosyl-L-methionine = N,N-dimethylethanolamine phosphate + S-adenosyl-L-homocysteine + H(+). It catalyses the reaction N,N-dimethylethanolamine phosphate + S-adenosyl-L-methionine = phosphocholine + S-adenosyl-L-homocysteine + H(+). It participates in phospholipid metabolism; phosphatidylcholine biosynthesis; phosphocholine from phosphoethanolamine. With respect to regulation, inhibited by phosphocholine. Inhibited by hexadecylphosphocholine (miltefosine). Inhibited by S-adenosyl-l-homocysteine. Weakly inhibited in vitro by amodiaquine, chloroquine and primaquine. Inhibited by NSC-158011. In terms of biological role, catalyzes N-methylation of phosphoethanolamine, phosphomonomethylethanolamine and phosphodimethylethanolamine, the three methylation steps required to convert phosphoethanolamine to phosphocholine. Has no ethanolamine- or phosphatidylethanolamine-N-methyltransferase activity. Required for gametocyte development, maturation and transmission to mosquitoes and for oocyst formation in the mosquito midgut. This chain is Phosphoethanolamine N-methyltransferase, found in Plasmodium falciparum (isolate 3D7).